The primary structure comprises 176 residues: Nucleoside triphosphate/diphosphate phosphatase (176 aa).

Arginine 23 (proton donor) is an active-site residue. Mg(2+) is bound by residues asparagine 87, aspartate 103, aspartate 105, aspartate 107, aspartate 120, and glutamate 123.

It belongs to the Ntdp family. Mg(2+) is required as a cofactor.

The catalysed reaction is a ribonucleoside 5'-triphosphate + H2O = a ribonucleoside 5'-diphosphate + phosphate + H(+). It carries out the reaction a ribonucleoside 5'-diphosphate + H2O = a ribonucleoside 5'-phosphate + phosphate + H(+). Has nucleoside phosphatase activity towards nucleoside triphosphates and nucleoside diphosphates. The polypeptide is Nucleoside triphosphate/diphosphate phosphatase (Bacillus cereus (strain B4264)).